The chain runs to 198 residues: Holliday junction branch migration complex subunit RuvA (198 aa).

The tract at residues 1–63 (MYDYIKGQLT…EDAHLLFGFH (63 aa)) is domain I. Positions 64-142 (TEDEKDVFLK…EAPQETGNTK (79 aa)) are domain II. A flexible linker region spans residues 143 to 147 (ARSNK). Residues 148 to 198 (AGNTQLDEAIEALLALGYKAAELKKIRAFFEGTSETAEQYIKSALKLLMKG) are domain III.

This sequence belongs to the RuvA family. Homotetramer. Forms an RuvA(8)-RuvB(12)-Holliday junction (HJ) complex. HJ DNA is sandwiched between 2 RuvA tetramers; dsDNA enters through RuvA and exits via RuvB. An RuvB hexamer assembles on each DNA strand where it exits the tetramer. Each RuvB hexamer is contacted by two RuvA subunits (via domain III) on 2 adjacent RuvB subunits; this complex drives branch migration. In the full resolvosome a probable DNA-RuvA(4)-RuvB(12)-RuvC(2) complex forms which resolves the HJ.

The protein localises to the cytoplasm. The RuvA-RuvB-RuvC complex processes Holliday junction (HJ) DNA during genetic recombination and DNA repair, while the RuvA-RuvB complex plays an important role in the rescue of blocked DNA replication forks via replication fork reversal (RFR). RuvA specifically binds to HJ cruciform DNA, conferring on it an open structure. The RuvB hexamer acts as an ATP-dependent pump, pulling dsDNA into and through the RuvAB complex. HJ branch migration allows RuvC to scan DNA until it finds its consensus sequence, where it cleaves and resolves the cruciform DNA. The sequence is that of Holliday junction branch migration complex subunit RuvA from Streptococcus pyogenes serotype M28 (strain MGAS6180).